A 357-amino-acid chain; its full sequence is Inositol-tetrakisphosphate 1-kinase 3 (357 aa).

The 1D-myo-inositol 1,3,4-trisphosphate site is built by lysine 56 and lysine 98. Residues arginine 133 and lysine 183 each coordinate ATP. The 1D-myo-inositol 1,3,4-trisphosphate site is built by histidine 190 and lysine 222. Residues 211-222 (QEFVNHGGVLFK), serine 237, and serine 262 each bind ATP. Mg(2+)-binding residues include aspartate 302, aspartate 317, and asparagine 319. Residue asparagine 319 coordinates 1D-myo-inositol 1,3,4-trisphosphate.

It belongs to the ITPK1 family. As to quaternary structure, monomer. It depends on Mg(2+) as a cofactor. In terms of tissue distribution, expressed in roots, leaves, flowers, anthers and embryos.

It catalyses the reaction 1D-myo-inositol 3,4,5,6-tetrakisphosphate + ATP = 1D-myo-inositol 1,3,4,5,6-pentakisphosphate + ADP + H(+). The enzyme catalyses 1D-myo-inositol 1,3,4-trisphosphate + ATP = 1D-myo-inositol 1,3,4,5-tetrakisphosphate + ADP + H(+). The catalysed reaction is 1D-myo-inositol 1,3,4-trisphosphate + ATP = 1D-myo-inositol 1,3,4,6-tetrakisphosphate + ADP + H(+). In terms of biological role, kinase that can phosphorylate various inositol polyphosphate such as Ins(3,4,5,6)P4 or Ins(1,3,4)P3 and participates in phytic acid biosynthesis in developing seeds. Phytic acid is the primary storage form of phosphorus in cereal grains and other plant seeds. In Oryza sativa subsp. japonica (Rice), this protein is Inositol-tetrakisphosphate 1-kinase 3.